Consider the following 255-residue polypeptide: Electron transfer flavoprotein subunit beta (255 aa).

Alanine 2 is subject to N-acetylalanine. Residues alanine 9, asparagine 39–cysteine 42, cysteine 66, and glycine 123–threonine 134 each bind AMP. Residues alanine 183 to lysine 205 are recognition loop. An N6,N6,N6-trimethyllysine; by ETFBKMT; alternate modification is found at lysine 200. An N6-acetyllysine; alternate modification is found at lysine 200. At lysine 200 the chain carries N6-methyllysine; alternate. An N6,N6,N6-trimethyllysine; by ETFBKMT modification is found at lysine 203. Lysine 210 carries the post-translational modification N6-acetyllysine; alternate. Lysine 210 carries the post-translational modification N6-succinyllysine; alternate. Phosphoserine is present on residues serine 223 and serine 226. The residue at position 238 (lysine 238) is an N6-acetyllysine. Residue lysine 248 is modified to N6-acetyllysine; alternate. Lysine 248 carries the post-translational modification N6-succinyllysine; alternate.

This sequence belongs to the ETF beta-subunit/FixA family. In terms of assembly, heterodimer composed of ETFA and ETFB. Identified in a complex that contains ETFA, ETFB and ETFRF1. Interacts with ACADM. Post-translationally, methylated. Trimethylation at Lys-200 and Lys-203 may negatively regulate the activity in electron transfer from acyl-CoA dehydrogenases.

It localises to the mitochondrion matrix. Heterodimeric electron transfer flavoprotein that accepts electrons from several mitochondrial dehydrogenases, including acyl-CoA dehydrogenases, glutaryl-CoA and sarcosine dehydrogenase. It transfers the electrons to the main mitochondrial respiratory chain via ETF-ubiquinone oxidoreductase. Required for normal mitochondrial fatty acid oxidation and normal amino acid metabolism. ETFB binds an AMP molecule that probably has a purely structural role. This Mus musculus (Mouse) protein is Electron transfer flavoprotein subunit beta.